We begin with the raw amino-acid sequence, 46 residues long: Mu-segestritoxin-Sf1h (46 aa).

Cystine bridges form between cysteine 3–cysteine 19, cysteine 10–cysteine 22, cysteine 18–cysteine 42, and cysteine 24–cysteine 40. The interval 31 to 33 (RPW) is keys region for toxin activity.

The protein belongs to the neurotoxin 16 (SFI) family. As to expression, expressed by the venom gland.

The protein resides in the secreted. Functionally, insecticidal toxin. It inhibits insect voltage-gated sodium channels (Nav) by partially blocking the channel pore in DUM neurons from the American cockroach, not by acting as a gating modifier. The inhibition is only partially reversible after prolonged washout. In vivo, the toxin causes flaccid paralysis followed by death when injected into Heliothis virescens larvae. It also causes uncoordinated movements followed by full paralysis to sheep blowflies (Lucilia cuprina). When the toxin is fused to snowdrop lectin, it is orally active against larvae of the tomato moth (Laconobia oleracea), the rice brown planthopper (Nilaparvata lugens), and the peach-potato aphid (Myzus persicae). This chain is Mu-segestritoxin-Sf1h, found in Segestria florentina (Tube-web spider).